Reading from the N-terminus, the 96-residue chain is Prokineticin Bo8 (96 aa).

An N-terminal signal peptide occupies residues 1–19 (MKCFAQIVVLLLVIAFSHG). Cystine bridges form between C26–C38, C32–C50, C37–C78, C60–C86, and C80–C95.

Expressed by the skin glands.

It localises to the secreted. Its function is as follows. Potent agonist for both PKR1/PROKR1 and PKR2/PROKR2, and inducer of a potent and long-lasting hyperalgesia. Also potentiates capsaicin-induced TRPV1 current, when tested on DRG neurons. At subnanomolar concentrations, this protein both induces potent chemotaxis of macrophages and stimulates LPS-induced production of the pro-inflammatory cytokines IL-1 and IL-12. In vivo, potently stimulates the contraction of the guinea-pig gastrointestinal (GI) smooth muscle (nanomolar concentration). The chain is Prokineticin Bo8 from Bombina orientalis (Oriental fire-bellied toad).